A 572-amino-acid chain; its full sequence is Flagellin B (572 aa).

This sequence belongs to the bacterial flagellin family. Heteromer of flaA and flaB.

It localises to the secreted. Its subcellular location is the bacterial flagellum. Flagellin is the subunit protein which polymerizes to form the filaments of bacterial flagella. In Campylobacter jejuni subsp. jejuni serotype O:2 (strain ATCC 700819 / NCTC 11168), this protein is Flagellin B (flaB).